The sequence spans 306 residues: GTP cyclohydrolase FolE2 (306 aa).

It belongs to the GTP cyclohydrolase IV family.

The enzyme catalyses GTP + H2O = 7,8-dihydroneopterin 3'-triphosphate + formate + H(+). It participates in cofactor biosynthesis; 7,8-dihydroneopterin triphosphate biosynthesis; 7,8-dihydroneopterin triphosphate from GTP: step 1/1. Its function is as follows. Converts GTP to 7,8-dihydroneopterin triphosphate. This Pseudoalteromonas atlantica (strain T6c / ATCC BAA-1087) protein is GTP cyclohydrolase FolE2.